The primary structure comprises 255 residues: Glutamate racemase (255 aa).

Substrate contacts are provided by residues 7 to 8 (DS) and 39 to 40 (YG). Cys-70 serves as the catalytic Proton donor/acceptor. Residue 71–72 (NT) participates in substrate binding. Cys-181 functions as the Proton donor/acceptor in the catalytic mechanism. 182–183 (TH) contributes to the substrate binding site.

The protein belongs to the aspartate/glutamate racemases family.

The catalysed reaction is L-glutamate = D-glutamate. Its pathway is cell wall biogenesis; peptidoglycan biosynthesis. In terms of biological role, provides the (R)-glutamate required for cell wall biosynthesis. The sequence is that of Glutamate racemase from Helicobacter pylori (strain ATCC 700392 / 26695) (Campylobacter pylori).